The following is a 478-amino-acid chain: Cytochrome c-552 (478 aa).

A signal peptide spans 1–26 (MARKTLRARRFFSLIFPFFFITSVYA). Heme c is bound at residue histidine 94. Positions 122, 125, and 126 each coordinate heme. Positions 160, 163, 164, 209, 212, and 213 each coordinate heme c. The Ca(2+) site is built by glutamate 215, tyrosine 216, lysine 261, and glutamine 263. Substrate is bound at residue tyrosine 216. A substrate-binding site is contributed by histidine 264. Residues histidine 275, cysteine 282, cysteine 285, histidine 286, histidine 301, cysteine 314, cysteine 317, histidine 318, and histidine 393 each contribute to the heme c site.

This sequence belongs to the cytochrome c-552 family. Requires Ca(2+) as cofactor. The cofactor is heme c.

The protein resides in the periplasm. The catalysed reaction is 6 Fe(III)-[cytochrome c] + NH4(+) + 2 H2O = 6 Fe(II)-[cytochrome c] + nitrite + 8 H(+). It participates in nitrogen metabolism; nitrate reduction (assimilation). Functionally, catalyzes the reduction of nitrite to ammonia, consuming six electrons in the process. This is Cytochrome c-552 from Salmonella gallinarum (strain 287/91 / NCTC 13346).